Reading from the N-terminus, the 524-residue chain is Methylmalonyl-CoA carboxyltransferase 12S subunit (524 aa).

Residues 13–268 (MEGRVEQLAE…NNTEEASFVN (256 aa)) enclose the CoA carboxyltransferase N-terminal domain. The tract at residues 13–506 (MEGRVEQLAE…RRKIASALEM (494 aa)) is carboxyltransferase. The 233-residue stretch at 274–506 (SPNTELRDIV…RRKIASALEM (233 aa)) folds into the CoA carboxyltransferase C-terminal domain.

As to quaternary structure, homohexamer. Transcarboxylase is composed of three subunits: 1.3S, 5S, and 12S. The core of the enzyme is composed of six 12S subunits. On each side of the core there are three pairs of 5S subunits. Each 5S dimer is attached to the core by two 1.3S subunits. Thus the total number of chains is 30 (6 + 12 + 12).

It catalyses the reaction (S)-methylmalonyl-CoA + pyruvate = propanoyl-CoA + oxaloacetate. The 12S subunit specifically catalyzes the transfer of the carboxyl group of methylmalonyl CoA to the biotin of the 1.3S subunit forming propanoyl-CoA and carboxylated 1.3S-biotin. The sequence is that of Methylmalonyl-CoA carboxyltransferase 12S subunit from Propionibacterium freudenreichii subsp. shermanii.